The primary structure comprises 411 residues: Serine hydroxymethyltransferase (411 aa).

Residue 120 to 122 (GHL) coordinates (6S)-5,6,7,8-tetrahydrofolate. Lys225 carries the N6-(pyridoxal phosphate)lysine modification. 350–352 (SPF) provides a ligand contact to (6S)-5,6,7,8-tetrahydrofolate.

The protein belongs to the SHMT family. As to quaternary structure, homodimer. It depends on pyridoxal 5'-phosphate as a cofactor.

The protein resides in the cytoplasm. The enzyme catalyses (6R)-5,10-methylene-5,6,7,8-tetrahydrofolate + glycine + H2O = (6S)-5,6,7,8-tetrahydrofolate + L-serine. Its pathway is one-carbon metabolism; tetrahydrofolate interconversion. It participates in amino-acid biosynthesis; glycine biosynthesis; glycine from L-serine: step 1/1. In terms of biological role, catalyzes the reversible interconversion of serine and glycine with tetrahydrofolate (THF) serving as the one-carbon carrier. This reaction serves as the major source of one-carbon groups required for the biosynthesis of purines, thymidylate, methionine, and other important biomolecules. Also exhibits THF-independent aldolase activity toward beta-hydroxyamino acids, producing glycine and aldehydes, via a retro-aldol mechanism. The sequence is that of Serine hydroxymethyltransferase from Lactobacillus johnsonii (strain CNCM I-12250 / La1 / NCC 533).